Reading from the N-terminus, the 295-residue chain is Translational activator of cytochrome c oxidase 1 (295 aa).

The residue at position 162 (K162) is an N6-acetyllysine. Positions 190-225 (VEDREKKAVNLERALELAIEAGAEDVREAEDEEEEK) form a coiled coil.

Belongs to the TACO1 family.

It localises to the mitochondrion. Acts as a translational activator of mitochondrially-encoded cytochrome c oxidase 1. The polypeptide is Translational activator of cytochrome c oxidase 1 (Rattus norvegicus (Rat)).